The primary structure comprises 510 residues: Allene oxide synthase 2, chloroplastic (510 aa).

The N-terminal 31 residues, 1 to 31 (MALTLSFSLPLPSLHQKIPSKYSTFRPIIVS), are a transit peptide targeting the chloroplast. Residues Lys-127, His-158, and Lys-162 each coordinate heme b. Residues Asn-315 and Lys-321 each contribute to the (13S)-hydroperoxy-(9Z,11E)-octadecadienoate site. Asn-315 serves as a coordination point for (13S)-hydroperoxy-(9Z,11E,15Z)-octadecatrienoate. Heme b-binding residues include Lys-463 and Cys-465.

Belongs to the cytochrome P450 family. The cofactor is heme b. Expressed in flower buds, leaves, roots, stems, petioles and cotyledons. Not detected in ripe fruits. Expressed in sieve elements.

It is found in the plastid. It localises to the chloroplast inner membrane. The catalysed reaction is (13S)-hydroperoxy-(9Z,11E,15Z)-octadecatrienoate = (9Z,13S,15Z)-12,13-epoxyoctadeca-9,11,15-trienoate + H2O. It carries out the reaction (13S)-hydroperoxy-(9Z,11E)-octadecadienoate = (9Z,13S)-12,13-epoxyoctadeca-9,11-dienoate + H2O. In terms of biological role, cytochrome P450 of the CYP74A subfamily involved in the biosynthesis of jasmonic acid from lipoxygenase-derived hydroperoxides of free fatty acids. Catalyzes the synthesis of unstable allene oxide, which is further converted spontaneously by hydrolysis or cyclization. Metabolizes 13- but not 9-hydroperoxides of linoleic and linolenic acids. Can use 15S-hydroperoxy-11(Z),13(E),17(Z)-eicosatrienoic acid (15-HPET) and 13S-hydroperoxy-9(Z),11(E),15(Z)-octadecatrienoic acid (13-HPOT) as substrates, but only 50% activity with 13S-hydroperoxy-9(Z),11(E)-octadecadienoic acid (13-HPOD). The protein is Allene oxide synthase 2, chloroplastic of Solanum lycopersicum (Tomato).